The primary structure comprises 304 residues: Uricase (304 aa).

Alanine 2 is modified (N-acetylalanine). Residues lysine 10 and lysine 23 each carry the N6-acetyllysine; alternate modification. N6-succinyllysine; alternate occurs at positions 10 and 23. Lysine 23 (charge relay system) is an active-site residue. N6-acetyllysine occurs at positions 27 and 36. 2 positions are modified to phosphoserine: serine 39 and serine 63. Threonine 68 (charge relay system) is an active-site residue. Residues threonine 68 and aspartate 69 each contribute to the urate site. Residues lysine 118, lysine 122, and lysine 164 each carry the N6-acetyllysine modification. A urate-binding site is contributed by phenylalanine 170. An N6-acetyllysine mark is found at lysine 175 and lysine 185. Arginine 187 contributes to the urate binding site. N6-acetyllysine; alternate is present on residues lysine 221 and lysine 228. An N6-succinyllysine; alternate mark is found at lysine 221 and lysine 228. Residue serine 232 is modified to Phosphoserine. 3 residues coordinate urate: valine 235, glutamine 236, and asparagine 262. Histidine 264 functions as the Charge relay system in the catalytic mechanism. Lysine 278 bears the N6-acetyllysine mark. Phosphotyrosine is present on tyrosine 289. The Microbody targeting signal motif lies at 302 to 304; that stretch reads SRL.

Belongs to the uricase family. In terms of assembly, homotetramer.

The protein resides in the peroxisome. The catalysed reaction is urate + O2 + H2O = 5-hydroxyisourate + H2O2. It participates in purine metabolism; urate degradation; (S)-allantoin from urate: step 1/3. Functionally, catalyzes the oxidation of uric acid to 5-hydroxyisourate, which is further processed to form (S)-allantoin. In Sus scrofa (Pig), this protein is Uricase (UOX).